Reading from the N-terminus, the 201-residue chain is UPF0301 protein CE2927 (201 aa).

Belongs to the UPF0301 (AlgH) family.

This Corynebacterium efficiens (strain DSM 44549 / YS-314 / AJ 12310 / JCM 11189 / NBRC 100395) protein is UPF0301 protein CE2927.